A 151-amino-acid polypeptide reads, in one-letter code: Viral interleukin-17 (151 aa).

The N-terminal stretch at 1-22 (MTFRKTSLVLLLLLSIDCIVKS) is a signal peptide. 3 N-linked (GlcNAc...) asparagine; by host glycosylation sites follow: asparagine 36, asparagine 53, and asparagine 64. 2 cysteine pairs are disulfide-bonded: cysteine 90–cysteine 140 and cysteine 95–cysteine 142.

Belongs to the IL-17 family.

It localises to the secreted. This chain is Viral interleukin-17 (13), found in Saimiri sciureus (Common squirrel monkey).